The sequence spans 342 residues: Serine/threonine-protein kinase SAPK1 (342 aa).

Positions 4 to 260 constitute a Protein kinase domain; sequence YEVMRDIGSG…IPEIKNHPWF (257 aa). ATP contacts are provided by residues 10–18 and K33; that span reads IGSGNFGVA. D123 serves as the catalytic Proton acceptor. Residues 253-342 form a C-terminal region; it reads EIKNHPWFLK…ENSGDFVCAL (90 aa).

This sequence belongs to the protein kinase superfamily. Ser/Thr protein kinase family. In terms of processing, phosphorylated. As to expression, expressed in leaf blades, leaf sheaths and roots. Expressed in shoots and roots of young seedlings.

The enzyme catalyses L-seryl-[protein] + ATP = O-phospho-L-seryl-[protein] + ADP + H(+). The catalysed reaction is L-threonyl-[protein] + ATP = O-phospho-L-threonyl-[protein] + ADP + H(+). With respect to regulation, activated by phosphorylation in response to hyperosmotic stress within 5 minutes. Its function is as follows. May play a role in signal transduction of hyperosmotic response. The polypeptide is Serine/threonine-protein kinase SAPK1 (SAPK1) (Oryza sativa subsp. japonica (Rice)).